Consider the following 354-residue polypeptide: Uroporphyrinogen decarboxylase (354 aa).

Substrate is bound by residues 27–31 (RQAGR), aspartate 77, tyrosine 154, serine 209, and histidine 327.

The protein belongs to the uroporphyrinogen decarboxylase family. As to quaternary structure, homodimer.

The protein resides in the cytoplasm. It carries out the reaction uroporphyrinogen III + 4 H(+) = coproporphyrinogen III + 4 CO2. It functions in the pathway porphyrin-containing compound metabolism; protoporphyrin-IX biosynthesis; coproporphyrinogen-III from 5-aminolevulinate: step 4/4. Its function is as follows. Catalyzes the decarboxylation of four acetate groups of uroporphyrinogen-III to yield coproporphyrinogen-III. This chain is Uroporphyrinogen decarboxylase, found in Shewanella amazonensis (strain ATCC BAA-1098 / SB2B).